The sequence spans 492 residues: Rab5 GDP/GTP exchange factor (492 aa).

An interaction with ubiquitinated proteins region spans residues methionine 1–serine 74. The segment at aspartate 13–arginine 47 adopts an A20-type zinc-finger fold. The Zn(2+) site is built by cysteine 19, cysteine 23, cysteine 35, and cysteine 38. The interval glutamate 66–lysine 85 is disordered. The span at phenylalanine 69–serine 84 shows a compositional bias: low complexity. A phosphoserine mark is found at serine 125 and serine 133. Lysine 152 and lysine 171 each carry N6-acetyllysine. In terms of domain architecture, VPS9 spans glutamate 233–asparagine 376. Phosphoserine is present on residues serine 374, serine 378, serine 391, and serine 401. Positions valine 408–glutamate 449 form a coiled coil. Residues isoleucine 471 to glycine 492 are disordered.

In terms of assembly, heterodimer with RABEP1. The heterodimer binds RAB4A and RAB5A that have been activated by GTP-binding. Binds TSC2, GGA1, GGA2, GGA3, AP1G1 and AP1G2. Interacts with RAB21, and with 100-fold lower affinity also with RAB22. Interacts with ubiquitinated EGFR. Interacts with RGS14; the interaction is GTP-dependent. Monoubiquitinated. Detected in brain.

It localises to the cytoplasm. The protein resides in the early endosome. Its subcellular location is the recycling endosome. Its function is as follows. Rab effector protein acting as linker between gamma-adaptin and RAB5A. Involved in endocytic membrane fusion and membrane trafficking of recycling endosomes. Stimulates nucleotide exchange on RAB5A. Can act as a ubiquitin ligase. The protein is Rab5 GDP/GTP exchange factor (RABGEF1) of Bos taurus (Bovine).